Here is a 4128-residue protein sequence, read N- to C-terminus: DNA-dependent protein kinase catalytic subunit (4128 aa).

Lys117 is modified (N6-acetyllysine). An HEAT 1 repeat occupies 288–323; it reads DNYVSLFEVLLKWCAHTNVELKKAALSALESFLKQV. Phosphoserine occurs at positions 511 and 687. Position 828 is an N6-acetyllysine (Lys828). Residues Ser841 and Ser893 each carry the phosphoserine modification. The HEAT 2 repeat unit spans residues 1004-1040; that stretch reads QDTVALLEAILDGIVDPVDSTLRDFCGRCIREFLKWS. Position 1065 is a phosphoserine (Ser1065). Lys1209 carries the N6-acetyllysine modification. Residues 1503–1538 are interaction with C1D; the sequence is LDLSCKQLASGLLELAFAFGGLCERLVSLLLNPAVL. The segment at 1503 to 1538 is leucine-zipper; that stretch reads LDLSCKQLASGLLELAFAFGGLCERLVSLLLNPAVL. A TPR 1 repeat occupies 1723 to 1756; it reads PMQSREFPPGTPRFNNYVDCMKKFLDALELSQSP. N6-acetyllysine is present on Lys1970. Positions 2050-2073 are disordered; it reads QSYSYSSQDPRPATGRFRRREQRD. Phosphoserine; by autocatalysis is present on Ser2056. At Lys2259 the chain carries N6-acetyllysine. The tract at residues 2436-3212 is KIP-binding; it reads LDIIYKMMPK…DNSMNVDQDG (777 aa). Thr2535 is modified (phosphothreonine). Thr2609 is subject to Phosphothreonine; by autocatalysis. Phosphoserine; by autocatalysis is present on Ser2612. A phosphothreonine; by autocatalysis mark is found at Thr2638 and Thr2647. Residues 2737–2765 form a may split the end of the DNA molecule, with the two strands separating around the region region; sequence EKLSLMYARKGVAEQKREKEIKSELKMKQ. Residue Ser2789 is modified to Phosphoserine. An FAT domain is found at 2906 to 3539; the sequence is PAKRVRGKAR…VYPFIISSES (634 aa). 2 TPR repeats span residues 2920-2948 and 2949-2982; these read VLRW…SEIG and TKQI…QDWV. A disordered region spans residues 3200 to 3222; sequence LPEDNSMNVDQDGDPSDRMEVQE. A Phosphoserine modification is found at Ser3205. 5 positions are modified to N6-acetyllysine: Lys3241, Lys3260, Lys3621, Lys3638, and Lys3642. The 332-residue stretch at 3722–4053 folds into the PI3K/PI4K catalytic domain; it reads FDERVTVMAS…ICYAKRKLAG (332 aa). The G-loop stretch occupies residues 3728–3734; that stretch reads VMASLRR. A phosphoserine mark is found at Ser3731 and Ser3821. The catalytic loop stretch occupies residues 3919–3927; sequence GIGDRHLNN. The tract at residues 3939–3964 is activation loop; sequence GIDFGHAFGSATQFLPVPELMPFRLT. Ser4026 bears the Phosphoserine mark. The 33-residue stretch at 4096–4128 folds into the FATC domain; that stretch reads SGLSEETQVKCLMDQATDPNILGRTWEGWEPWM.

The protein belongs to the PI3/PI4-kinase family. DNA-PK is a heterotrimer of PRKDC and the Ku dimer (composed of XRCC6/Ku70 and XRCC5/Ku86). Formation of this complex may be promoted by interaction with ILF3. Component of the core long-range non-homologous end joining (NHEJ) complex (also named DNA-PK complex) composed of PRKDC, LIG4, XRCC4, XRCC6/Ku70, XRCC5/Ku86 and NHEJ1/XLF. Additional component of the NHEJ complex includes PAXX. Following autophosphorylation, PRKDC dissociates from DNA. Interacts with DNA-PKcs-interacting protein (KIP) with the region upstream the kinase domain. PRKDC alone also interacts with and phosphorylates DCLRE1C, thereby activating the latent endonuclease activity of this protein. Interacts with C1D. Interacts with TTI1 and TELO2. Interacts with CIB1. Interacts with SETX. Interacts with NR4A3; the DNA-dependent protein kinase complex DNA-PK phosphorylates and activates NR4A3 and prevents NR4A3 ubiquitination and degradation. Interacts with BRAT1. Part of the HDP-RNP complex composed of at least HEXIM1, PRKDC, XRCC5, XRCC6, paraspeckle proteins (SFPQ, NONO, PSPC1, RBM14, and MATR3) and NEAT1 RNA. Interacts with KAT5. In terms of processing, autophosphorylated at two clusters, the T2609 cluster and the S2056 cluster. Autophosphorylated on Ser-2056, Thr-2609, Thr-2638 and Thr-2647. Ser-2056 and Thr-2609 are DNA damage-inducible phosphorylation sites (inducible with ionizing radiation, IR) dephosphorylated by PPP5C. Autophosphorylation induces a conformational change that leads to remodeling of the DNA-PK complex, requisite for efficient end processing and DNA repair. Autophosphorylation in trans within DNA-PK complexes loaded on DNA ends leads to the dissociation of PRKDC from DNA and the transition into the short-range NHEJ complex. Autophosphorylation of the T2609 cluster is required for hematopoietic development and protein synthesis in erythrocytes precursors. S-nitrosylated by GAPDH. Post-translationally, polyubiquitinated by RNF144A, leading to proteasomal degradation.

Its subcellular location is the nucleus. It is found in the nucleolus. The protein localises to the cytoplasm. It localises to the cytosol. It carries out the reaction L-seryl-[protein] + ATP = O-phospho-L-seryl-[protein] + ADP + H(+). The enzyme catalyses L-threonyl-[protein] + ATP = O-phospho-L-threonyl-[protein] + ADP + H(+). Activity seems to be attenuated by autophosphorylation. Binding to the SL1 region of U3 small nucleolar RNA promotes auto-phosphorylation activity. Inhibited by wortmannin. Serine/threonine-protein kinase that acts as a molecular sensor for DNA damage. Involved in DNA non-homologous end joining (NHEJ) required for double-strand break (DSB) repair and V(D)J recombination. Must be bound to DNA to express its catalytic properties. Promotes processing of hairpin DNA structures in V(D)J recombination by activation of the hairpin endonuclease artemis (DCLRE1C). Recruited by XRCC5 and XRCC6 to DNA ends and is required to (1) protect and align broken ends of DNA, thereby preventing their degradation, (2) and sequester the DSB for repair by NHEJ. Acts as a scaffold protein to aid the localization of DNA repair proteins to the site of damage. The assembly of the DNA-PK complex at DNA ends is also required for the NHEJ ligation step. Found at the ends of chromosomes, suggesting a further role in the maintenance of telomeric stability and the prevention of chromosomal end fusion. Also involved in modulation of transcription. As part of the DNA-PK complex, involved in the early steps of ribosome assembly by promoting the processing of precursor rRNA into mature 18S rRNA in the small-subunit processome. Binding to U3 small nucleolar RNA, recruits PRKDC and XRCC5/Ku86 to the small-subunit processome. Recognizes the substrate consensus sequence [ST]-Q. Phosphorylates 'Ser-139' of histone variant H2AX, thereby regulating DNA damage response mechanism. Phosphorylates ASF1A, DCLRE1C, c-Abl/ABL1, histone H1, HSPCA, c-jun/JUN, p53/TP53, PARP1, POU2F1, DHX9, FH, SRF, NHEJ1/XLF, XRCC1, XRCC4, XRCC5, XRCC6, WRN, MYC and RFA2. Can phosphorylate C1D not only in the presence of linear DNA but also in the presence of supercoiled DNA. Ability to phosphorylate p53/TP53 in the presence of supercoiled DNA is dependent on C1D. Acts as a regulator of the phosphatidylinositol 3-kinase/protein kinase B signal transduction by mediating phosphorylation of 'Ser-473' of protein kinase B (PKB/AKT1, PKB/AKT2, PKB/AKT3), promoting their activation. Contributes to the determination of the circadian period length by antagonizing phosphorylation of CRY1 'Ser-588' and increasing CRY1 protein stability, most likely through an indirect mechanism. Plays a role in the regulation of DNA virus-mediated innate immune response by assembling into the HDP-RNP complex, a complex that serves as a platform for IRF3 phosphorylation and subsequent innate immune response activation through the cGAS-STING pathway. Also regulates the cGAS-STING pathway by catalyzing phosphorylation of CGAS, thereby impairing CGAS oligomerization and activation. Also regulates the cGAS-STING pathway by mediating phosphorylation of PARP1. This Homo sapiens (Human) protein is DNA-dependent protein kinase catalytic subunit (PRKDC).